The following is a 671-amino-acid chain: APC membrane recruitment protein 2 (671 aa).

Disordered regions lie at residues 1–24 (METSRSRGGGGAVSERGGAGASVG), 76–358 (SGGT…SDPS), 391–414 (EAGPSCDKHVPGPGKPALSKKNPG), and 444–598 (SQTE…PLRT). Gly residues-rich tracts occupy residues 7-21 (RGGGGAVSERGGAGA) and 126-137 (GGDSGGGGGGRP). S162 bears the Phosphoserine mark. A compositionally biased stretch (basic and acidic residues) spans 171–182 (GRSENGKGEPVD). 2 positions are modified to phosphoserine: S229 and S233. Basic and acidic residues-rich tracts occupy residues 236–260 (CVKEETPRAAREPEEPSQDAPRDPA), 276–286 (APARSCREAEG), and 295–307 (ARGEDAAGHRRAE). Positions 342–353 (APAAPDPASVDP) are enriched in low complexity. Phosphoserine occurs at positions 355 and 358. Low complexity predominate over residues 447–458 (EEQGPEPQEGAA). Basic and acidic residues-rich tracts occupy residues 472–487 (TPKDTRCVEAAKDASS) and 498–514 (IEPHPKEEPKHPEKEQQ).

This sequence belongs to the Amer family. As to quaternary structure, interacts with APC.

Its subcellular location is the cell membrane. In terms of biological role, negative regulator of the canonical Wnt signaling pathway involved in neuroectodermal patterning. Acts by specifically binding phosphatidylinositol 4,5-bisphosphate (PtdIns(4,5)P2), translocating to the cell membrane and interacting with key regulators of the canonical Wnt signaling pathway, such as components of the beta-catenin destruction complex. This is APC membrane recruitment protein 2 (AMER2) from Homo sapiens (Human).